The primary structure comprises 266 residues: ATG8-interacting protein 2 (266 aa).

Residues 14 to 17 (WEVV) carry the AIM (Atg8-family-interacting motif) motif. A helical membrane pass occupies residues 191-210 (TNTVWSICIAAAVMGIVILG). An AIM (Atg8-family-interacting motif) motif is present at residues 218-221 (WQIL).

As to quaternary structure, interacts with ATG8F.

It is found in the endoplasmic reticulum membrane. The protein localises to the membrane. Its function is as follows. May be involved in salt stress-induced vesicle-to-vacuole trafficking pathway. Through its interaction with ATG8F, may enable delivery of the vesicle bodies to the vacuole by an autophagic pathway. Plays a role in seed germination in response to exogenous abscisic acid (ABA) treatment. In Arabidopsis thaliana (Mouse-ear cress), this protein is ATG8-interacting protein 2.